The chain runs to 341 residues: Ferredoxin--NADP reductase 2 (341 aa).

FAD contacts are provided by Asp-42, Gln-50, Tyr-55, Ile-95, Phe-129, Asp-294, and Ser-335.

The protein belongs to the ferredoxin--NADP reductase type 2 family. As to quaternary structure, homodimer. FAD serves as cofactor.

The catalysed reaction is 2 reduced [2Fe-2S]-[ferredoxin] + NADP(+) + H(+) = 2 oxidized [2Fe-2S]-[ferredoxin] + NADPH. This is Ferredoxin--NADP reductase 2 from Chloroherpeton thalassium (strain ATCC 35110 / GB-78).